The chain runs to 85 residues: RNA-binding protein Hfq (85 aa).

Residues 9-68 (DPFLNALRRERVPVSIYLVNGIKLQGQVESFDQFVILLKNTVSQMVYKHAISTVVPARPF) enclose the Sm domain.

Belongs to the Hfq family. As to quaternary structure, homohexamer.

Functionally, RNA chaperone that binds small regulatory RNA (sRNAs) and mRNAs to facilitate mRNA translational regulation in response to envelope stress, environmental stress and changes in metabolite concentrations. Also binds with high specificity to tRNAs. This chain is RNA-binding protein Hfq, found in Shewanella frigidimarina (strain NCIMB 400).